The following is a 375-amino-acid chain: Major DNA-binding protein (375 aa).

Belongs to the herpesviridae DNA-binding protein family.

Its subcellular location is the host nucleus. Its function is as follows. Single-stranded DNA-binding protein required for DNA replication. This chain is Major DNA-binding protein, found in Equine herpesvirus 1 (strain HVS25A) (EHV-1).